A 440-amino-acid polypeptide reads, in one-letter code: Thymidine phosphorylase (440 aa).

The protein belongs to the thymidine/pyrimidine-nucleoside phosphorylase family. Homodimer.

The catalysed reaction is thymidine + phosphate = 2-deoxy-alpha-D-ribose 1-phosphate + thymine. The protein operates within pyrimidine metabolism; dTMP biosynthesis via salvage pathway; dTMP from thymine: step 1/2. Its function is as follows. The enzymes which catalyze the reversible phosphorolysis of pyrimidine nucleosides are involved in the degradation of these compounds and in their utilization as carbon and energy sources, or in the rescue of pyrimidine bases for nucleotide synthesis. This is Thymidine phosphorylase from Escherichia coli O139:H28 (strain E24377A / ETEC).